The chain runs to 471 residues: Ribulose bisphosphate carboxylase large chain (471 aa).

Substrate is bound by residues Asn-115 and Thr-165. Lys-167 acts as the Proton acceptor in catalysis. Substrate is bound at residue Lys-169. Mg(2+)-binding residues include Lys-193, Asp-195, and Glu-196. Residue Lys-193 is modified to N6-carboxylysine. His-286 (proton acceptor) is an active-site residue. 3 residues coordinate substrate: Arg-287, His-319, and Ser-371.

This sequence belongs to the RuBisCO large chain family. Type I subfamily. As to quaternary structure, heterohexadecamer of 8 large chains and 8 small chains. It depends on Mg(2+) as a cofactor.

The protein resides in the carboxysome. It catalyses the reaction 2 (2R)-3-phosphoglycerate + 2 H(+) = D-ribulose 1,5-bisphosphate + CO2 + H2O. It carries out the reaction D-ribulose 1,5-bisphosphate + O2 = 2-phosphoglycolate + (2R)-3-phosphoglycerate + 2 H(+). Its function is as follows. RuBisCO catalyzes two reactions: the carboxylation of D-ribulose 1,5-bisphosphate, the primary event in carbon dioxide fixation, as well as the oxidative fragmentation of the pentose substrate in the photorespiration process. Both reactions occur simultaneously and in competition at the same active site. The protein is Ribulose bisphosphate carboxylase large chain of Prochlorococcus marinus (strain MIT 9301).